Consider the following 367-residue polypeptide: tRNA/tmRNA (uracil-C(5))-methyltransferase (367 aa).

Residues Gln-191, Tyr-218, Asn-223, Glu-239, and Asp-299 each coordinate S-adenosyl-L-methionine. The active-site Nucleophile is Cys-324. Glu-358 (proton acceptor) is an active-site residue.

It belongs to the class I-like SAM-binding methyltransferase superfamily. RNA M5U methyltransferase family. TrmA subfamily.

The enzyme catalyses uridine(54) in tRNA + S-adenosyl-L-methionine = 5-methyluridine(54) in tRNA + S-adenosyl-L-homocysteine + H(+). It catalyses the reaction uridine(341) in tmRNA + S-adenosyl-L-methionine = 5-methyluridine(341) in tmRNA + S-adenosyl-L-homocysteine + H(+). In terms of biological role, dual-specificity methyltransferase that catalyzes the formation of 5-methyluridine at position 54 (m5U54) in all tRNAs, and that of position 341 (m5U341) in tmRNA (transfer-mRNA). This chain is tRNA/tmRNA (uracil-C(5))-methyltransferase, found in Campylobacter concisus (strain 13826).